Consider the following 233-residue polypeptide: DNA-directed RNA polymerase V subunit 5C (233 aa).

Belongs to the archaeal Rpo5/eukaryotic RPB5 RNA polymerase subunit family. In terms of assembly, component of the RNA polymerase V complex. Expressed in flower buds and siliques.

It localises to the nucleus. In terms of biological role, DNA-dependent RNA polymerase catalyzes the transcription of DNA into RNA using the four ribonucleoside triphosphates as substrates. Component of RNA polymerase V involved in RNA-directed DNA methylation-dependent (RdDM) silencing of endogenous repeated sequences, including transposable elements. The chain is DNA-directed RNA polymerase V subunit 5C (NRPE5C) from Arabidopsis thaliana (Mouse-ear cress).